A 380-amino-acid chain; its full sequence is MAEAMVVEDRPAEAKRFFCHMCNVEINIPNSDFTCPLCANGFVEELPANAPEMDSSTAGASGSARSGSSGSGSSGSHDTLSRGSSSSGSQVNVESLRNDIVSLLNMRNVPNLEITIEPNRRHSNVLHLGGFGGPSGSDSARGLTAGGRVRPANLDRLDNVLFDFLQSLPLAGATAEIVTGPGGGGVGGGGNSHMFFMGNPGDYAWGREGLDTIVTQMLNQMETSGPPPLSAQRINEIPNVQINAEEVNRKIQCSICWDDFKIDETVRKLPCSHLYHENCIVPWLNLHSTCPICRKSLADDGNDADDEFVMLDAFGPEMAADGSNSERRSASTATGTDNPSPANNPSQAAAEGGRTRPDANPAQAARNNIFTFDDDNMFLD.

Positions A50–N92 are disordered. Low complexity-rich tracts occupy residues S55–S68 and S74–S89. The RING-type; atypical zinc finger occupies C253 to R294. A disordered region spans residues E317 to N367. A compositionally biased stretch (low complexity) spans N338–A350.

Interacts (via N-terminus) with CG7546 (via Ubl domain).

The catalysed reaction is S-ubiquitinyl-[E2 ubiquitin-conjugating enzyme]-L-cysteine + [acceptor protein]-L-lysine = [E2 ubiquitin-conjugating enzyme]-L-cysteine + N(6)-ubiquitinyl-[acceptor protein]-L-lysine.. The protein operates within protein modification; protein ubiquitination. Functionally, E3 ubiquitin-protein ligase that mediates E2-dependent, 'Lys-48'- and/or 'Lys-63'-linked polyubiquitination of substrates. Recognizes miRNA-empty Ago1 and triggers its degradation via polyubiquitination independently of the Bag6 complex. By targeting miRNA-empty Ago1, eliminates dysfunctional Ago1 not able to bind miRNA and thereby plays a role in the quality control of miRNA-mediated silencing. The polypeptide is E3 ubiquitin-protein ligase Iruka (Drosophila melanogaster (Fruit fly)).